The following is a 728-amino-acid chain: Ankyrin repeat protein A (728 aa).

ANK repeat units lie at residues Ile-381–Tyr-410, Asn-429–Ala-458, Thr-477–Arg-506, Tyr-525–Gln-554, and Ala-573–Asn-602.

This sequence belongs to the Toxin_15 family.

This chain is Ankyrin repeat protein A (arpA), found in Escherichia coli (strain K12).